A 192-amino-acid chain; its full sequence is UPF0301 protein Bamb_0737 (192 aa).

The protein belongs to the UPF0301 (AlgH) family.

The protein is UPF0301 protein Bamb_0737 of Burkholderia ambifaria (strain ATCC BAA-244 / DSM 16087 / CCUG 44356 / LMG 19182 / AMMD) (Burkholderia cepacia (strain AMMD)).